An 877-amino-acid chain; its full sequence is Lipophilic envelope-spanning tunnel protein B (877 aa).

Over 1–19 the chain is Cytoplasmic; that stretch reads MSQETPASTTEAQIKNKRR. Residues 20–40 traverse the membrane as a helical segment; it reads ISPFWLLPFIALMIASWLIWD. Residues 41 to 877 are Periplasmic-facing; that stretch reads SYQDRGNTVT…WREWGTALPK (837 aa). MCE/MlaD regions lie at residues 46-149, 160-272, 279-382, 391-499, 515-625, 634-737, and 746-862; these read GNTV…VALD, DLMI…GLYE, RGVI…VVPG, DVLT…PLYA, TTVS…ILYA, GGQI…LQEA, and DGLS…LLQE.

This sequence belongs to the PqiB family. As to quaternary structure, homohexamer. May interact with LetA in the inner membrane. May also interact with partners in the outer membrane.

It is found in the cell inner membrane. Functionally, forms a tunnel that spans the entire periplasmic space. Is probably involved in the transport of lipids between the inner membrane and the outer membrane through the tunnel. Forms a dynamic tunnel sufficiently long to mediate lipid transport directly between the two membranes without the need for a shuttle protein. Binds phospholipids. Lipids bind inside the tunnel. Required for outer membrane homeostasis. Contributes to membrane integrity. The polypeptide is Lipophilic envelope-spanning tunnel protein B (Escherichia coli (strain K12)).